Consider the following 1228-residue polypeptide: MALPRPVQYGKVQRMSYGKVKEVLDLPYLLEIQKKSFQWFLDEGLREVLREISPIKDYSETLLLEFVDYYFDGPPKYSEQECKERDATYARPLKVKVRLINKETGEIKEQDIYMGEFPIMTETGTFIINGAERVIVSQLIRSPGCYFASSIDKQGRKIFSGTLIPNRGAWLEFETDASELLSVRLDRTRKVSLTTLLKAFGLYNQQLIFEKFGEDERLKASLEKEANKGELGNPVENALLEVYRRLRPGEPPNVENARNLLYSMFFDPRRYDLAKVGRYKFNKKLSLWKRIFNKRAAQDVVDPKTGEILVKEGELITREIATQIQDAGVNEVWVYADEERPFKVVGNNTVKLDRYVEFDVSDINIKELVYRPVLDDILNTTNDVLEIKRLIKERERELVPYCLTIDDIFAATSYFLGLKYGIGTTDDIDHLGNRRVRAVGELLQNQFRIGLARMERVIRERMNIHDIDTVTPQTLINIRPVTAAIKEFFGSSPLSQFMDQVNPLAALTNKRRLSALGPGGLSRDRAGFEVRDVHHSHYGRMCPIETPEGPNIGLITSLATYARVNEYGFLETPYRKVDKKEARVTNEVVYLTADEEDTYKIAQATEPVDEEGRFINQRVTVRFGEEIIEVDKHEVDLIDISPKQIVSVSTSLIPFLENDDANRALMGSNMQRQAVPLLMTESPIIGTGVEYRAAVDSGVCILAKKDGVVENVSADEIVIRNNDGTKDVYHLLKFKRTNQGTCFNQRPIVRKGQEVKAGEVIADGPSTDHGELALGKNVLVAFMPWEGYNYEDAILISERLVKEDVYTSIHIEEYECEARDTKLGPEEITRDIPNVGEDAIKDLDERGIIRIGAEVKSGDILVGKVTPKGETELTAEERLLRAIFGEKARETRDTSLRVPHGEGGIVVDVKVFSRDKGDELPPGVNQLVRVYVAQKRKISVGDKMAGRHGNKGVISRILPVEDMPFLPDGTPVDIVLNPLGVPSRMNIGQILETHLGYAAKALGWKVATPVFDGAKEEDIEEALKLAGLNPTGKTILYDGRTGEPFDNEVTVGYMYMLKLVHLVDDKIHARSTGPYSLVTQQPLGGKAQFGGQRFGEMEVWALEAYGAAYTLQELLTVKSDDVTGRVKTYEAIVKGENIPEPGIPESFKVLVKELQSLCLDVKLLSEDNKEIELKESVDEDEQPQGLGAFEIGGDEIEEDKEDDKEKFYEDLMNATQEDDQGEIDDIDE.

Residues 1175–1204 (ESVDEDEQPQGLGAFEIGGDEIEEDKEDDK) are disordered. Acidic residues predominate over residues 1192 to 1202 (GGDEIEEDKED).

Belongs to the RNA polymerase beta chain family. The RNAP catalytic core consists of 2 alpha, 1 beta, 1 beta' and 1 omega subunit. When a sigma factor is associated with the core the holoenzyme is formed, which can initiate transcription.

The catalysed reaction is RNA(n) + a ribonucleoside 5'-triphosphate = RNA(n+1) + diphosphate. DNA-dependent RNA polymerase catalyzes the transcription of DNA into RNA using the four ribonucleoside triphosphates as substrates. This is DNA-directed RNA polymerase subunit beta from Caldicellulosiruptor bescii (strain ATCC BAA-1888 / DSM 6725 / KCTC 15123 / Z-1320) (Anaerocellum thermophilum).